The sequence spans 235 residues: Ribosomal RNA large subunit methyltransferase E (235 aa).

The S-adenosyl-L-methionine site is built by Gly-76, Trp-78, Asp-99, Asp-115, and Asp-139. Residue Lys-179 is the Proton acceptor of the active site.

Belongs to the class I-like SAM-binding methyltransferase superfamily. RNA methyltransferase RlmE family.

It is found in the cytoplasm. The catalysed reaction is uridine(2552) in 23S rRNA + S-adenosyl-L-methionine = 2'-O-methyluridine(2552) in 23S rRNA + S-adenosyl-L-homocysteine + H(+). Functionally, specifically methylates the uridine in position 2552 of 23S rRNA at the 2'-O position of the ribose in the fully assembled 50S ribosomal subunit. This Rhodopseudomonas palustris (strain BisA53) protein is Ribosomal RNA large subunit methyltransferase E.